Consider the following 450-residue polypeptide: Phosphoglucosamine mutase (450 aa).

Ser-101 functions as the Phosphoserine intermediate in the catalytic mechanism. Positions 101, 240, 242, and 244 each coordinate Mg(2+). Ser-101 bears the Phosphoserine mark.

The protein belongs to the phosphohexose mutase family. It depends on Mg(2+) as a cofactor. Activated by phosphorylation.

It carries out the reaction alpha-D-glucosamine 1-phosphate = D-glucosamine 6-phosphate. Its function is as follows. Catalyzes the conversion of glucosamine-6-phosphate to glucosamine-1-phosphate. The polypeptide is Phosphoglucosamine mutase (Streptococcus equi subsp. zooepidemicus (strain MGCS10565)).